Reading from the N-terminus, the 579-residue chain is Mitogen-activated protein kinase kinase kinase 7 (579 aa).

The segment at 1–300 (MSTASAASSS…FPGADEPLQY (300 aa)) is interaction with MAPK8IP1. The Protein kinase domain maps to 36-291 (IEVEEVVGRG…KIMTHLMRYF (256 aa)). ATP contacts are provided by residues 42–50 (VGRGAFGVV) and Lys63. A Glycyl lysine isopeptide (Lys-Gly) (interchain with G-Cter in ubiquitin) cross-link involves residue Lys72. Catalysis depends on Asp156, which acts as the Proton acceptor. Lys158 is covalently cross-linked (Glycyl lysine isopeptide (Lys-Gly) (interchain with G-Cter in ubiquitin)). Phosphothreonine; by autocatalysis is present on residues Thr184 and Thr187. Ser192 carries the phosphoserine; by autocatalysis modification. Lys209 is covalently cross-linked (Glycyl lysine isopeptide (Lys-Gly) (interchain with G-Cter in ubiquitin)). 2 disordered regions span residues 301-339 (PCQYSDEGQSNSATSTGSFMDITSTNTSNKSDTNMEQVP) and 354-391 (KNQAKQQSESGRLSLGASRGSSVESLPPTSEGKRMSAD). Residues 306–322 (DEGQSNSATSTGSFMDI) are compositionally biased toward polar residues. Composition is skewed to low complexity over residues 323–334 (TSTNTSNKSDTN) and 361–375 (SESGRLSLGASRGSS). Ser367, Ser389, and Ser412 each carry phosphoserine. Over residues 416–425 (LTVTGTDPGQ) the composition is skewed to polar residues. Positions 416–466 (LTVTGTDPGQVSSRSSSPSVRMITTSGPTSEKPARSHPWTPDDSTDTNGSD) are disordered. The span at 426 to 436 (VSSRSSSPSVR) shows a compositional bias: low complexity. Ser428 bears the Phosphoserine mark.

Belongs to the protein kinase superfamily. STE Ser/Thr protein kinase family. MAP kinase kinase kinase subfamily. As to quaternary structure, can form homodimer. Binds both upstream activators and downstream substrates in multimolecular complexes. Interacts with TAB1/MAP3K7IP1, TAB2/MAP3K7IP2 and TAB3/MAP3K7IP3. Identified in the TRIKA2 complex composed of MAP3K7/TAK1, TAB1/MAP3K7IP1 and TAB2/MAP3K7IP2. Interacts with PPM1L and PPM1B/PP2CB. Interaction with PP2A and PPP6C leads to its repressed activity. Interacts with TRAF6 and TAB1/MAP3K7IP1; during IL-1 signaling. Interacts with TAOK1 and TAOK2; interaction with TAOK2 interferes with MAP3K7 interaction with IKKA, thus preventing NF-kappa-B activation. Interacts with DYNC2I2 (via WD domains). Interacts with CYLD and RBCK1. Interacts with TGFBR1; induces MAP3K7/TAK1 activation by TRAF6. Interacts with MAPK8IP1 and SMAD6. Interacts with isoform 1 of VRK2. Interacts with DAB2; the interaction is induced by TGF-beta stimulation and may mediate TGF-beta stimulated JNK activation. Interacts with TRIM5. Part of a complex containing ITCH, NDFIP1 and MAP3K7. Interacts with IFIT5; the interaction synergizes the recruitment of IKK to MAP3K7 and enhances IKK phosphorylation. Interacts with PLEKHM1 (via N- and C-terminus). Found in a complex with SH3RF1, RAC2, MAP2K7/MKK7, MAPK8IP1/JIP1, MAPK8/JNK1 and MAPK9/JNK2. Interacts with SASH1. Interacts with RIPK1. Mg(2+) serves as cofactor. Post-translationally, association with TAB1/MAP3K7IP1 promotes autophosphorylation at Ser-192 and subsequent activation. Association with TAB2/MAP3K7IP2, itself associated with free unanchored Lys-63 polyubiquitin chain, promotes autophosphorylation and subsequent activation of MAP3K7. Dephosphorylation at Ser-192 by PPM1B/PP2CB and at Thr-187 by PP2A and PPP6C leads to inactivation. 'Lys-48'-linked polyubiquitination at Lys-72 is induced by TNFalpha, and leads to proteasomal degradation. Undergoes 'Lys-48'-linked polyubiquitination catalyzed by ITCH. 'Lys-63'-linked polyubiquitination at Lys-158 by TRIM8 does not lead to proteasomal degradation but contributes to autophosphorylation and activation. Deubiquitinated by CYLD, a protease that selectively cleaves 'Lys-63'-linked ubiquitin chains. Deubiquitinated by USP19; leading to negative regulation of TNF-alpha- and IL-1beta-triggered NF-kappa-B activation.

The protein resides in the cytoplasm. Its subcellular location is the cell membrane. The enzyme catalyses L-seryl-[protein] + ATP = O-phospho-L-seryl-[protein] + ADP + H(+). It catalyses the reaction L-threonyl-[protein] + ATP = O-phospho-L-threonyl-[protein] + ADP + H(+). Activated by pro-inflammatory cytokines and in response to physical and chemical stresses, including osmotic stress, oxidative stress, arsenic and ultraviolet light irradiation. Activated by 'Lys-63'-linked polyubiquitination and by autophosphorylation. Association with TAB1/MAP3K7IP1 and TAB2/MAP3K7IP2 promotes activation through autophosphorylation, whereas PPM1B/PP2CB, PP2A and PPP6C dephosphorylation leads to inactivation. Ceramides are also able to activate MAP3K7/TAK1. Serine/threonine kinase which acts as an essential component of the MAP kinase signal transduction pathway. Plays an important role in the cascades of cellular responses evoked by changes in the environment. Mediates signal transduction of TRAF6, various cytokines including interleukin-1 (IL-1), transforming growth factor-beta (TGFB), TGFB-related factors like BMP2 and BMP4, toll-like receptors (TLR), tumor necrosis factor receptor CD40 and B-cell receptor (BCR). Once activated, acts as an upstream activator of the MKK/JNK signal transduction cascade and the p38 MAPK signal transduction cascade through the phosphorylation and activation of several MAP kinase kinases like MAP2K1/MEK1, MAP2K3/MKK3, MAP2K6/MKK6 and MAP2K7/MKK7. These MAP2Ks in turn activate p38 MAPKs and c-jun N-terminal kinases (JNKs); both p38 MAPK and JNK pathways control the transcription factors activator protein-1 (AP-1). Independently of MAP2Ks and p38 MAPKs, acts as a key activator of NF-kappa-B by promoting activation of the I-kappa-B-kinase (IKK) core complex. Mechanistically, recruited to polyubiquitin chains of RIPK2 and IKBKG/NEMO via TAB2/MAP3K7IP2 and TAB3/MAP3K7IP3, and catalyzes phosphorylation and activation of IKBKB/IKKB component of the IKK complex, leading to NF-kappa-B activation. In osmotic stress signaling, plays a major role in the activation of MAPK8/JNK1, but not that of NF-kappa-B. Promotes TRIM5 capsid-specific restriction activity. Phosphorylates RIPK1 at 'Ser-321' which positively regulates RIPK1 interaction with RIPK3 to promote necroptosis but negatively regulates RIPK1 kinase activity and its interaction with FADD to mediate apoptosis. Phosphorylates STING1 in response to cGAMP-activation, promoting association between STEEP1 and STING1 and STING1 translocation to COPII vesicles. The sequence is that of Mitogen-activated protein kinase kinase kinase 7 (MAP3K7) from Bos taurus (Bovine).